The chain runs to 493 residues: tRNA (uracil-5-)-methyltransferase homolog B (493 aa).

Residues 1–14 (MHNPRLFLSRAGFF) constitute a mitochondrion transit peptide. S-adenosyl-L-methionine contacts are provided by Q312, E362, and N412. Residue C440 is the Nucleophile of the active site. The active-site Proton acceptor is E486.

The protein belongs to the class I-like SAM-binding methyltransferase superfamily. RNA M5U methyltransferase family.

Its subcellular location is the mitochondrion matrix. The enzyme catalyses uridine(54) in tRNA + S-adenosyl-L-methionine = 5-methyluridine(54) in tRNA + S-adenosyl-L-homocysteine + H(+). It carries out the reaction a uridine in 12S rRNA + S-adenosyl-L-methionine = a 5-methyluridine in 12S rRNA + S-adenosyl-L-homocysteine + H(+). Its function is as follows. Mitochondrial S-adenosyl-L-methionine-dependent methyltransferase that catalyzes the formation of 5-methyl-uridine in tRNAs and 12S rRNA. Catalyzes the methylation of uridine at position 54 (m5U54) in all tRNAs. Specifically methylates the uridine in position 425 of 12S rRNA (m5U425). Does not affect RNA stability or mitochondrial translation. The sequence is that of tRNA (uracil-5-)-methyltransferase homolog B from Mus musculus (Mouse).